A 298-amino-acid chain; its full sequence is Small ribosomal subunit protein uS2 (298 aa).

Residues 272–298 (EGGDWAASSAAPAGESWAEAQPTEAKW) form a disordered region.

Belongs to the universal ribosomal protein uS2 family. Component of the small ribosomal subunit. Mature ribosomes consist of a small (40S) and a large (60S) subunit. The 40S subunit contains about 33 different proteins and 1 molecule of RNA (18S). The 60S subunit contains about 49 different proteins and 3 molecules of RNA (25S, 5.8S and 5S). Interacts with rps21.

The protein localises to the cytoplasm. In terms of biological role, required for the assembly and/or stability of the 40S ribosomal subunit. Required for the processing of the 20S rRNA-precursor to mature 18S rRNA in a late step of the maturation of 40S ribosomal subunits. The polypeptide is Small ribosomal subunit protein uS2 (rps0) (Aspergillus niger (strain ATCC MYA-4892 / CBS 513.88 / FGSC A1513)).